Here is a 181-residue protein sequence, read N- to C-terminus: Endoribonuclease YbeY (181 aa).

Zn(2+)-binding residues include histidine 115, histidine 119, and histidine 125.

It belongs to the endoribonuclease YbeY family. Requires Zn(2+) as cofactor.

Its subcellular location is the cytoplasm. Single strand-specific metallo-endoribonuclease involved in late-stage 70S ribosome quality control and in maturation of the 3' terminus of the 16S rRNA. The chain is Endoribonuclease YbeY from Bifidobacterium adolescentis (strain ATCC 15703 / DSM 20083 / NCTC 11814 / E194a).